Consider the following 118-residue polypeptide: Beta-2-microglobulin (118 aa).

The N-terminal stretch at 1 to 20 (MARVVALVLLGLLSLTGLEA) is a signal peptide. The Ig-like C1-type domain occupies 25–111 (PKVQVYSRHP…QHSTLKEPLI (87 aa)). An intrachain disulfide couples Cys-45 to Cys-99.

This sequence belongs to the beta-2-microglobulin family. In terms of assembly, heterodimer of an alpha chain and a beta chain. Beta-2-microglobulin is the beta-chain of major histocompatibility complex class I molecules.

It is found in the secreted. Its function is as follows. Component of the class I major histocompatibility complex (MHC). Involved in the presentation of peptide antigens to the immune system. This chain is Beta-2-microglobulin (B2M), found in Equus asinus (Donkey).